A 350-amino-acid polypeptide reads, in one-letter code: GTPase Obg (350 aa).

The Obg domain maps to 1–159 (MKLVDEAEIE…RTLKLELKLL (159 aa)). A disordered region spans residues 127–147 (NMHFKSSTNRSPRQALPGEPG). The OBG-type G domain maps to 160-337 (ADVGLLGFPN…IMSRIMAFFD (178 aa)). Residues 166–173 (GFPNAGKS), 191–195 (FTTLY), 213–216 (DIPG), 287–290 (NKAD), and 318–320 (SAL) contribute to the GTP site. Residues serine 173 and threonine 193 each contribute to the Mg(2+) site.

It belongs to the TRAFAC class OBG-HflX-like GTPase superfamily. OBG GTPase family. Monomer. Requires Mg(2+) as cofactor.

Its subcellular location is the cytoplasm. Functionally, an essential GTPase which binds GTP, GDP and possibly (p)ppGpp with moderate affinity, with high nucleotide exchange rates and a fairly low GTP hydrolysis rate. Plays a role in control of the cell cycle, stress response, ribosome biogenesis and in those bacteria that undergo differentiation, in morphogenesis control. The protein is GTPase Obg of Stenotrophomonas maltophilia (strain R551-3).